The chain runs to 78 residues: Acyl carrier protein (78 aa).

In terms of domain architecture, Carrier spans 2-77; sequence SDIEQRVKKI…QAIDYVNANL (76 aa). At serine 37 the chain carries O-(pantetheine 4'-phosphoryl)serine.

Belongs to the acyl carrier protein (ACP) family. In terms of processing, 4'-phosphopantetheine is transferred from CoA to a specific serine of apo-ACP by AcpS. This modification is essential for activity because fatty acids are bound in thioester linkage to the sulfhydryl of the prosthetic group.

The protein localises to the cytoplasm. The protein operates within lipid metabolism; fatty acid biosynthesis. Functionally, carrier of the growing fatty acid chain in fatty acid biosynthesis. In Methylobacillus flagellatus (strain ATCC 51484 / DSM 6875 / VKM B-1610 / KT), this protein is Acyl carrier protein.